We begin with the raw amino-acid sequence, 575 residues long: Transport inhibitor response 1-like protein Os04g0395600 (575 aa).

The region spanning 1–45 is the F-box domain; the sequence is MTYFPEEVVEHIFSFLPAQRDRNTVSLVCKVWYEIERLSRRGVFV. Lys-69 contacts 1D-myo-inositol hexakisphosphate. An interaction with auxin-responsive proteins region spans residues 76 to 77; it reads DF. Residues 108 to 109 and Arg-340 contribute to the 1D-myo-inositol hexakisphosphate site; that span reads KR. The interval 343 to 348 is interaction with auxin-responsive proteins; it reads PSDFYV. Residue 396–398 participates in 1D-myo-inositol hexakisphosphate binding; sequence RFR. Residues 400-404 are interaction with auxin-responsive proteins; that stretch reads CILEP. Arg-431 provides a ligand contact to 1D-myo-inositol hexakisphosphate. An interaction with auxin-responsive proteins region spans residues 459 to 460; the sequence is AF. 1D-myo-inositol hexakisphosphate contacts are provided by residues 479-480 and Arg-504; that span reads RK.

As to quaternary structure, part of a SCF (SKP1-cullin-F-box) protein ligase complex. May interact with auxin and auxin-responsive proteins.

It localises to the nucleus. The protein operates within protein modification; protein ubiquitination. The polypeptide is Transport inhibitor response 1-like protein Os04g0395600 (Oryza sativa subsp. japonica (Rice)).